A 640-amino-acid chain; its full sequence is 1,4-alpha-glucan branching enzyme GlgB (640 aa).

Asp-317 acts as the Nucleophile in catalysis. Glu-370 serves as the catalytic Proton donor.

The protein belongs to the glycosyl hydrolase 13 family. GlgB subfamily. In terms of assembly, monomer.

It catalyses the reaction Transfers a segment of a (1-&gt;4)-alpha-D-glucan chain to a primary hydroxy group in a similar glucan chain.. It participates in glycan biosynthesis; glycogen biosynthesis. In terms of biological role, catalyzes the formation of the alpha-1,6-glucosidic linkages in glycogen by scission of a 1,4-alpha-linked oligosaccharide from growing alpha-1,4-glucan chains and the subsequent attachment of the oligosaccharide to the alpha-1,6 position. This chain is 1,4-alpha-glucan branching enzyme GlgB, found in Nitratidesulfovibrio vulgaris (strain DP4) (Desulfovibrio vulgaris).